Here is a 350-residue protein sequence, read N- to C-terminus: DNA repair protein RAD51 homolog 2 (350 aa).

Residues Met-1–Ser-75 are interaction with RAD51C. ATP is bound at residue Gly-108–Thr-115.

Belongs to the RecA family. RAD51 subfamily. In terms of assembly, part of the BCDX2 complex consisting of RAD51B, RAD51C, RAD51D and XRCC2; the complex has a ring-like structure arranged into a flat disc around a central channel. The BCDX2 subcomplex RAD51B:RAD51C interacts with RAD51. Interacts with SWSAP1; involved in homologous recombination repair. Interacts with HELQ. In terms of processing, phosphorylated on tyrosine residues by BCR-ABL. Expressed in a wide range of tissues.

It is found in the nucleus. Functionally, involved in the homologous recombination repair (HRR) pathway of double-stranded DNA breaks arising during DNA replication or induced by DNA-damaging agents. May promote the assembly of presynaptic RAD51 nucleoprotein filaments. Binds single-stranded DNA and double-stranded DNA and has DNA-dependent ATPase activity. Part of the RAD51 paralog protein complex BCDX2 which acts in the BRCA1-BRCA2-dependent HR pathway. Upon DNA damage, BCDX2 acts downstream of BRCA2 recruitment and upstream of RAD51 recruitment. BCDX2 binds predominantly to the intersection of the four duplex arms of the Holliday junction and to junction of replication forks. The BCDX2 complex was originally reported to bind single-stranded DNA, single-stranded gaps in duplex DNA and specifically to nicks in duplex DNA. The BCDX2 subcomplex RAD51B:RAD51C exhibits single-stranded DNA-dependent ATPase activity suggesting an involvement in early stages of the HR pathway. The sequence is that of DNA repair protein RAD51 homolog 2 (Rad51b) from Mus musculus (Mouse).